We begin with the raw amino-acid sequence, 367 residues long: DNA replication and repair protein RecF (367 aa).

G30–T37 contributes to the ATP binding site.

It belongs to the RecF family.

It localises to the cytoplasm. In terms of biological role, the RecF protein is involved in DNA metabolism; it is required for DNA replication and normal SOS inducibility. RecF binds preferentially to single-stranded, linear DNA. It also seems to bind ATP. The protein is DNA replication and repair protein RecF of Pseudomonas fluorescens (strain ATCC BAA-477 / NRRL B-23932 / Pf-5).